The chain runs to 198 residues: 7-methyl-GTP pyrophosphatase (198 aa).

Catalysis depends on Asp69, which acts as the Proton acceptor.

The protein belongs to the Maf family. YceF subfamily. Requires a divalent metal cation as cofactor.

Its subcellular location is the cytoplasm. It carries out the reaction N(7)-methyl-GTP + H2O = N(7)-methyl-GMP + diphosphate + H(+). Nucleoside triphosphate pyrophosphatase that hydrolyzes 7-methyl-GTP (m(7)GTP). May have a dual role in cell division arrest and in preventing the incorporation of modified nucleotides into cellular nucleic acids. This is 7-methyl-GTP pyrophosphatase from Yersinia pestis bv. Antiqua (strain Antiqua).